A 260-amino-acid polypeptide reads, in one-letter code: Adenosylcobinamide-GDP ribazoletransferase (260 aa).

6 consecutive transmembrane segments (helical) span residues 40 to 60 (AFPFAGLLIGFVPAFALLLLL), 64 to 84 (ADPLVAALVALAVQALVTGAL), 117 to 137 (YGAIALILSFAIRAAALAAIV), 142 to 162 (PLAAVLAIPAVAALSRGAITW), 189 to 209 (FALVAAGLLAALLIWPAFGLW), and 210 to 230 (PLVASLLAAGAAGFVCTVFIR).

Belongs to the CobS family. The cofactor is Mg(2+).

The protein localises to the cell inner membrane. The enzyme catalyses alpha-ribazole + adenosylcob(III)inamide-GDP = adenosylcob(III)alamin + GMP + H(+). It catalyses the reaction alpha-ribazole 5'-phosphate + adenosylcob(III)inamide-GDP = adenosylcob(III)alamin 5'-phosphate + GMP + H(+). It functions in the pathway cofactor biosynthesis; adenosylcobalamin biosynthesis; adenosylcobalamin from cob(II)yrinate a,c-diamide: step 7/7. In terms of biological role, joins adenosylcobinamide-GDP and alpha-ribazole to generate adenosylcobalamin (Ado-cobalamin). Also synthesizes adenosylcobalamin 5'-phosphate from adenosylcobinamide-GDP and alpha-ribazole 5'-phosphate. The protein is Adenosylcobinamide-GDP ribazoletransferase of Rhizobium etli (strain CIAT 652).